The chain runs to 67 residues: Large ribosomal subunit protein uL30 (67 aa).

The protein belongs to the universal ribosomal protein uL30 family. Part of the 50S ribosomal subunit.

This chain is Large ribosomal subunit protein uL30, found in Thermotoga maritima (strain ATCC 43589 / DSM 3109 / JCM 10099 / NBRC 100826 / MSB8).